The chain runs to 122 residues: Large ribosomal subunit protein eL34 (122 aa).

The protein belongs to the eukaryotic ribosomal protein eL34 family. In terms of assembly, component of the large ribosomal subunit. Mature ribosomes consist of a small (40S) and a large (60S) subunit. The 40S subunit contains about 32 different proteins and 1 molecule of RNA (18S). The 60S subunit contains 45 different proteins and 3 molecules of RNA (25S, 5.8S and 5S).

It localises to the cytoplasm. Functionally, component of the ribosome, a large ribonucleoprotein complex responsible for the synthesis of proteins in the cell. The small ribosomal subunit (SSU) binds messenger RNAs (mRNAs) and translates the encoded message by selecting cognate aminoacyl-transfer RNA (tRNA) molecules. The large subunit (LSU) contains the ribosomal catalytic site termed the peptidyl transferase center (PTC), which catalyzes the formation of peptide bonds, thereby polymerizing the amino acids delivered by tRNAs into a polypeptide chain. The nascent polypeptides leave the ribosome through a tunnel in the LSU and interact with protein factors that function in enzymatic processing, targeting, and the membrane insertion of nascent chains at the exit of the ribosomal tunnel. The polypeptide is Large ribosomal subunit protein eL34 (Candida albicans (strain SC5314 / ATCC MYA-2876) (Yeast)).